Reading from the N-terminus, the 349-residue chain is AA9 family lytic polysaccharide monooxygenase A (349 aa).

The signal sequence occupies residues 1-19; sequence MKSTFGLLALAAAAKLVSA. Cu(2+) is bound by residues His20 and His102. Residues Cys62 and Cys183 are joined by a disulfide bond. Residue His169 participates in O2 binding. Residue Tyr180 coordinates Cu(2+). A disordered region spans residues 233 to 304; it reads DGSSSGSSGS…SGSNSGSDSC (72 aa). Low complexity-rich tracts occupy residues 234 to 262 and 269 to 304; these read GSSS…AVPT and TSAT…SDSC. The CBM1 domain maps to 311 to 347; sequence GSVKIYGQCGGQNYSGPTSCEAGLICKEWNPYYHQCV. The N-linked (GlcNAc...) asparagine glycan is linked to Asn323.

This sequence belongs to the polysaccharide monooxygenase AA9 family. Cu(2+) is required as a cofactor.

It localises to the secreted. It catalyses the reaction [(1-&gt;4)-beta-D-glucosyl]n+m + reduced acceptor + O2 = 4-dehydro-beta-D-glucosyl-[(1-&gt;4)-beta-D-glucosyl]n-1 + [(1-&gt;4)-beta-D-glucosyl]m + acceptor + H2O.. Functionally, lytic polysaccharide monooxygenase (LPMO) that depolymerizes crystalline and amorphous polysaccharides via the oxidation of scissile alpha- or beta-(1-4)-glycosidic bonds, yielding C4 oxidation products. Catalysis by LPMOs requires the reduction of the active-site copper from Cu(II) to Cu(I) by a reducing agent and H(2)O(2) or O(2) as a cosubstrate. The chain is AA9 family lytic polysaccharide monooxygenase A (eglD) from Aspergillus fumigatus (strain CBS 144.89 / FGSC A1163 / CEA10) (Neosartorya fumigata).